The chain runs to 142 residues: FAD synthase (142 aa).

Residues 9–10 (VF), 14–17 (HLGH), aspartate 93, and tyrosine 120 each bind ATP.

It belongs to the archaeal FAD synthase family. Homodimer. The cofactor is a divalent metal cation.

The enzyme catalyses FMN + ATP + H(+) = FAD + diphosphate. It functions in the pathway cofactor biosynthesis; FAD biosynthesis; FAD from FMN: step 1/1. Its function is as follows. Catalyzes the transfer of the AMP portion of ATP to flavin mononucleotide (FMN) to produce flavin adenine dinucleotide (FAD) coenzyme. The chain is FAD synthase (ribL) from Thermoplasma volcanium (strain ATCC 51530 / DSM 4299 / JCM 9571 / NBRC 15438 / GSS1).